Consider the following 645-residue polypeptide: 1-deoxy-D-xylulose-5-phosphate synthase (645 aa).

Thiamine diphosphate contacts are provided by residues His-79 and 120 to 122 (AHS). A Mg(2+)-binding site is contributed by Asp-155. Thiamine diphosphate-binding positions include 156–157 (GA), Asn-184, Tyr-293, and Glu-375. Mg(2+) is bound at residue Asn-184.

This sequence belongs to the transketolase family. DXPS subfamily. As to quaternary structure, homodimer. The cofactor is Mg(2+). It depends on thiamine diphosphate as a cofactor.

It catalyses the reaction D-glyceraldehyde 3-phosphate + pyruvate + H(+) = 1-deoxy-D-xylulose 5-phosphate + CO2. Its pathway is metabolic intermediate biosynthesis; 1-deoxy-D-xylulose 5-phosphate biosynthesis; 1-deoxy-D-xylulose 5-phosphate from D-glyceraldehyde 3-phosphate and pyruvate: step 1/1. Catalyzes the acyloin condensation reaction between C atoms 2 and 3 of pyruvate and glyceraldehyde 3-phosphate to yield 1-deoxy-D-xylulose-5-phosphate (DXP). The chain is 1-deoxy-D-xylulose-5-phosphate synthase from Ruegeria sp. (strain TM1040) (Silicibacter sp.).